A 302-amino-acid chain; its full sequence is L-threonate dehydrogenase (302 aa).

NAD(+)-binding positions include 7–35 (FHVG…TWGA) and threonine 102. Residue lysine 178 is part of the active site. Lysine 246 contacts NAD(+).

The protein belongs to the HIBADH-related family. L-threonate dehydrogenase subfamily.

It carries out the reaction L-threonate + NAD(+) = 2-dehydro-L-erythronate + NADH + H(+). In terms of biological role, catalyzes oxidation of L-threonate to 2-oxo-tetronate. Can use either NAD(+) or NADP(+) as cosubstrate, with a preference for NAD(+). The protein is L-threonate dehydrogenase of Escherichia coli (strain K12).